A 240-amino-acid chain; its full sequence is Protein MGARP (240 aa).

The Cytoplasmic segment spans residues 1–40 (MYLRRAVSKTLALPLRAPPNPAPLGKDASLRRMSSNRFPG). Residues 41-63 (SSGSNMIYYLVVGVTVSAGGYYA) form a helical; Anchor for type IV membrane protein membrane-spanning segment. Over 64–240 (YKTVTSDQAK…VGSEAASAQG (177 aa)) the chain is Mitochondrial intermembrane. A disordered region spans residues 166 to 240 (RETTEVNPET…VGSEAASAQG (75 aa)). The span at 170-181 (EVNPETTPEVTN) shows a compositional bias: low complexity. A compositionally biased stretch (basic and acidic residues) spans 191–201 (DNDKDTTKNET). Positions 202–213 (SDEYAELEEENS) are enriched in acidic residues. Residues 228 to 240 (EASVGSEAASAQG) show a composition bias toward low complexity.

Interacts with RHOT1/Miro-1, TRAK1/OIP106 and TRAK2/GRIF1. Interacts with RHOT2/Miro-2. Expressed in the brain, adrenal gland and corneal endothelium (CE). Expressed in steroid-producing cells of the ovary and testis (at protein level). Expressed in steroid-producing cells of the ovary and testis. Weakly expressed in placenta. Expressed in corneal endothelial cells.

It localises to the mitochondrion. It is found in the mitochondrion outer membrane. The protein resides in the mitochondrion inner membrane. Plays a role in the trafficking of mitochondria along microtubules. Regulates the kinesin-mediated axonal transport of mitochondria to nerve terminals along microtubules during hypoxia. Participates in the translocation of TRAK2/GRIF1 from the cytoplasm to the mitochondrion. Also plays a role in steroidogenesis through maintenance of mitochondrial abundance and morphology. Plays an inhibitory role during neocortex development by regulating mitochondrial morphology, distribution and motility in neocortical neurons. The sequence is that of Protein MGARP (MGARP) from Homo sapiens (Human).